A 267-amino-acid polypeptide reads, in one-letter code: 3-methyl-2-oxobutanoate hydroxymethyltransferase (267 aa).

Positions 46 and 85 each coordinate Mg(2+). Residues 46 to 47 (DS), Asp85, and Lys115 each bind 3-methyl-2-oxobutanoate. A Mg(2+)-binding site is contributed by Glu117. Glu184 (proton acceptor) is an active-site residue.

This sequence belongs to the PanB family. In terms of assembly, homodecamer; pentamer of dimers. Mg(2+) is required as a cofactor.

It is found in the cytoplasm. The enzyme catalyses 3-methyl-2-oxobutanoate + (6R)-5,10-methylene-5,6,7,8-tetrahydrofolate + H2O = 2-dehydropantoate + (6S)-5,6,7,8-tetrahydrofolate. It functions in the pathway cofactor biosynthesis; (R)-pantothenate biosynthesis; (R)-pantoate from 3-methyl-2-oxobutanoate: step 1/2. Its function is as follows. Catalyzes the reversible reaction in which hydroxymethyl group from 5,10-methylenetetrahydrofolate is transferred onto alpha-ketoisovalerate to form ketopantoate. This Geotalea uraniireducens (strain Rf4) (Geobacter uraniireducens) protein is 3-methyl-2-oxobutanoate hydroxymethyltransferase.